A 341-amino-acid chain; its full sequence is tRNA N6-adenosine threonylcarbamoyltransferase (341 aa).

2 residues coordinate Fe cation: H112 and H116. Residues L134–G138, D167, G180, and N279 contribute to the substrate site. D307 provides a ligand contact to Fe cation.

Belongs to the KAE1 / TsaD family. Fe(2+) is required as a cofactor.

It is found in the cytoplasm. The enzyme catalyses L-threonylcarbamoyladenylate + adenosine(37) in tRNA = N(6)-L-threonylcarbamoyladenosine(37) in tRNA + AMP + H(+). Its function is as follows. Required for the formation of a threonylcarbamoyl group on adenosine at position 37 (t(6)A37) in tRNAs that read codons beginning with adenine. Is involved in the transfer of the threonylcarbamoyl moiety of threonylcarbamoyl-AMP (TC-AMP) to the N6 group of A37, together with TsaE and TsaB. TsaD likely plays a direct catalytic role in this reaction. This chain is tRNA N6-adenosine threonylcarbamoyltransferase, found in Rickettsia bellii (strain OSU 85-389).